A 190-amino-acid polypeptide reads, in one-letter code: Putative transcription factor ovo-like protein 3 (190 aa).

2 disordered regions span residues 1–21 (MPRA…GHLP) and 35–65 (SLGG…SAPR). A compositionally biased stretch (polar residues) spans 41–62 (AQQSSSVRDPWTAQPTQGNLTS). 4 C2H2-type zinc fingers span residues 70-92 (LGCP…LKCH), 98-120 (HLCR…MRTH), 126-149 (FRCS…AKVH), and 165-187 (HVCE…RALH).

This sequence belongs to the krueppel C2H2-type zinc-finger protein family.

The protein resides in the nucleus. Its function is as follows. May act as a transcription regulator. In Homo sapiens (Human), this protein is Putative transcription factor ovo-like protein 3 (OVOL3).